The sequence spans 534 residues: Kelch repeat and BTB domain-containing protein 4 (534 aa).

A disordered region spans residues 1-25 (MKGGNADSWQREKLASMESPEEPGA). In terms of domain architecture, BTB spans 61 to 128 (ADVTISVEGR…IYHGTVKLRA (68 aa)). Positions 163–255 (CLQVMWLADR…SLKEIGENVH (93 aa)) constitute a BACK domain. Kelch repeat units follow at residues 255 to 301 (HIYL…KHGG), 302 to 344 (DLYV…SVPG), 347 to 394 (AIYS…NLNG), 396 to 446 (IYLL…VHKD), and 448 to 497 (VFIV…VFRD).

As to quaternary structure, component of the BCR(KBTBD4) E3 ubiquitin ligase complex, at least composed of CUL3, KBTBD4 and RBX1.

Substrate-specific adapter of a BCR (BTB-CUL3-RBX1) E3 ubiquitin ligase complex which targets CoREST corepressor complex components RCOR1, KDM1A/LSD1 and HDAC2 for proteasomal degradation. RCOR1 is likely to be the primary target while degradation of KDM1A and HDAC2 is likely due to their association with RCOR1. Also targets RCOR3, MIER2 and MIER3 for proteasomal degradation as well as associated proteins ZNF217 and RREB1. Degradation is dependent on the presence of an ELM2 domain in the target proteins. The sequence is that of Kelch repeat and BTB domain-containing protein 4 (KBTBD4) from Homo sapiens (Human).